The following is a 232-amino-acid chain: tRNA (guanine-N(7)-)-methyltransferase (232 aa).

S-adenosyl-L-methionine contacts are provided by Glu63, Glu88, Asp115, and Asp137. Residue Asp137 is part of the active site. Residues Lys141, Asp173, and 211 to 214 each bind substrate; that span reads TRYE.

It belongs to the class I-like SAM-binding methyltransferase superfamily. TrmB family.

The catalysed reaction is guanosine(46) in tRNA + S-adenosyl-L-methionine = N(7)-methylguanosine(46) in tRNA + S-adenosyl-L-homocysteine. Its pathway is tRNA modification; N(7)-methylguanine-tRNA biosynthesis. Catalyzes the formation of N(7)-methylguanine at position 46 (m7G46) in tRNA. This chain is tRNA (guanine-N(7)-)-methyltransferase, found in Agrobacterium fabrum (strain C58 / ATCC 33970) (Agrobacterium tumefaciens (strain C58)).